The chain runs to 121 residues: MSKPRQSTLDPEDKKYLEIPDSEVVLPAAVDSYLRQKLKDQSLKECSSHVAAFADCSKDKYISVVWECRELQQLMKNCLVEYTTSERLIGMKREWVDASKKRIYEKRLQKELESKEPTPKK.

The CHCH domain maps to 43 to 86 (LKECSSHVAAFADCSKDKYISVVWECRELQQLMKNCLVEYTTSE). 2 consecutive short sequence motifs (cx9C motif) follow at residues 46–56 (CSSHVAAFADC) and 68–78 (CRELQQLMKNC). 2 disulfide bridges follow: Cys-46/Cys-78 and Cys-56/Cys-68.

Belongs to the CMC family.

This is an uncharacterized protein from Dictyostelium discoideum (Social amoeba).